A 2936-amino-acid polypeptide reads, in one-letter code: Neurobeachin (2936 aa).

Residues 961–985 form a disordered region; that stretch reads ENIKKGKKGNVSTISGLSSQTAGAK. The segment covering 970–982 has biased composition (polar residues); that stretch reads NVSTISGLSSQTA. 2 positions are modified to phosphoserine: Ser-1001 and Ser-1004. Composition is skewed to polar residues over residues 1203 to 1220 and 1231 to 1241; these read TSDG…SSTK and TLETESSNSKA. 3 disordered regions span residues 1203-1222, 1231-1265, and 1270-1289; these read TSDG…TKGL, TLET…ESGK, and IQTT…QQDR. The segment covering 1253–1265 has biased composition (basic and acidic residues); that stretch reads DTERSDDGKESGK. The span at 1270 to 1286 shows a compositional bias: polar residues; sequence IQTTATTQAVQGRSSTQ. A WD 1 repeat occupies 1316-1358; that stretch reads TTMFRIPEFKWSPMHQRLLTDLLFALETDVHVWRSHSTKSVMD. Disordered stretches follow at residues 1480–1521, 1639–1667, 1701–1721, and 1830–1850; these read QRDR…LSPI, PDTV…DSGM, VKKS…PAPS, and TGAV…VNGA. A Phosphoserine modification is found at Ser-1519. Residues 1701–1714 are compositionally biased toward basic and acidic residues; the sequence is VKKSQESLTEHPSE. A phosphoserine mark is found at Ser-1704 and Ser-1707. Positions 1835 to 1845 are enriched in low complexity; sequence SGSSSSSSSSS. Ser-2128 bears the Phosphoserine mark. Residues 2137-2245 form the BEACH-type PH domain; the sequence is NLAGPVVLST…TVKKVVYSLP (109 aa). Residues 2264–2553 form the BEACH domain; sequence ATPRQLYKSS…QLLIEPHPPR (290 aa). A Phosphoserine modification is found at Ser-2565. WD repeat units lie at residues 2708–2751, 2768–2808, 2850–2889, and 2892–2931; these read GHWD…HIIG, GHDH…RALE, EIND…QLYI, and GCDA…WHYE.

The protein belongs to the WD repeat neurobeachin family. In terms of assembly, interacts with RII subunit of PKA. Forebrain, brainstem and cerebellum.

The protein resides in the membrane. The protein localises to the endomembrane system. Its subcellular location is the postsynaptic cell membrane. Functionally, binds to type II regulatory subunits of protein kinase A and anchors/targets them to the membrane. May anchor the kinase to cytoskeletal and/or organelle-associated proteins. May have a role in membrane trafficking. The chain is Neurobeachin (Nbea) from Mus musculus (Mouse).